Consider the following 134-residue polypeptide: Small ribosomal subunit protein uS8c (134 aa).

Belongs to the universal ribosomal protein uS8 family. Part of the 30S ribosomal subunit.

The protein resides in the plastid. Its function is as follows. One of the primary rRNA binding proteins, it binds directly to 16S rRNA central domain where it helps coordinate assembly of the platform of the 30S subunit. This Cuscuta obtusiflora (Peruvian dodder) protein is Small ribosomal subunit protein uS8c (rps8).